The following is a 356-amino-acid chain: Na(+)/H(+) exchange regulatory cofactor NHE-RF1 (356 aa).

Serine 2 bears the N-acetylserine mark. Phosphoserine is present on residues serine 2 and serine 46. In terms of domain architecture, PDZ 1 spans 14-94 (LCCLEKGPNG…AVRLLVVDPE (81 aa)). The disordered stretch occupies residues 113–142 (AQEKSEHTEPPAAADTKKAGDQNEAEKSHL). Residues 151 to 231 (LCTMKKGPNG…EAKLLVVDKE (81 aa)) form the PDZ 2 domain. A disordered region spans residues 265-356 (NSREALVEPA…SKKNELFSNL (92 aa)). Phosphoserine is present on residues serine 266, serine 277, serine 287, and serine 288. Residues 272-288 (EPASESPRPALARSASS) are compositionally biased toward low complexity. At threonine 290 the chain carries Phosphothreonine. Phosphoserine is present on residues serine 291 and serine 299. Positions 307–317 (EPSSTSSSSDP) are enriched in low complexity. A compositionally biased stretch (basic and acidic residues) spans 346 to 356 (WSKKNELFSNL).

Homodimer, and heterodimer with NHERF2. Binds the N-termini of EZR, RDX and MSN. Binds the C-termini of PDGFRA, PDGFRB, ADRB2, NOS2 and CFTR. Binds ARHGAP17, EPI64, RACK1, OPRK1, GNAQ, CTNNB1 and PLCB3. Binds PDZK1. Interacts with CLCN3. Binds the C-terminus of PAG1. In resting T-cells, part of a PAG1-NHERF1-MSN complex which is disrupted upon TCR activation. Forms a complex with CFTR and SLC4A7. Forms a complex with SLC4A7 and ATP6V1B1. Interacts with TRPC4 (via the PDZ-binding domain). Directly interacts with HTR4. Interacts (via the PDZ 1 domain) with PODXL (via the C-terminal PDZ-binding motif DTHL); interaction is not detected in glomerular epithelium cells. Interacts (via the PDZ 1 domain) with PODXL (via the C-terminal PDZ-binding motif DTHL); the interaction take place early in the secretory pathway and is necessary for its apical membrane sorting. Interacts with SLC26A3. Interacts with MCC. Interacts with SLC34A1. Interacts (via the PDZ domains) with SLC26A6 isoform 4 and isoform 5. Interacts (via PDZ domains) with ACE2 (via PDZ-binding motif); the interaction may enhance ACE2 membrane residence.

It localises to the cytoplasm. The protein resides in the apical cell membrane. The protein localises to the cell projection. Its subcellular location is the filopodium. It is found in the ruffle. It localises to the microvillus. The protein resides in the endomembrane system. Scaffold protein that connects plasma membrane proteins with members of the ezrin/moesin/radixin family and thereby helps to link them to the actin cytoskeleton and to regulate their surface expression. Necessary for recycling of internalized ADRB2. Was first known to play a role in the regulation of the activity and subcellular location of SLC9A3. Necessary for cAMP-mediated phosphorylation and inhibition of SLC9A3. Involved in sperm capacitation. May participate in the regulation of the chloride and bicarbonate homeostasis in spermatozoa. May enhance Wnt signaling. May participate in HTR4 targeting to microvilli. Involved in the regulation of phosphate reabsorption in the renal proximal tubules. This Rattus norvegicus (Rat) protein is Na(+)/H(+) exchange regulatory cofactor NHE-RF1 (Nherf1).